Here is a 385-residue protein sequence, read N- to C-terminus: Di-N-acetylchitobiase (385 aa).

An N-terminal signal peptide occupies residues 1-38 (MSRPQLRRWRLVSSPPSGVPGLALLALLALLALRLAAG). In terms of domain architecture, GH18 spans 39 to 385 (TDCPCPEPEL…EVLKPKLLQR (347 aa)). Glu143 (proton donor) is an active-site residue. Asn193, Asn228, Asn262, and Asn299 each carry an N-linked (GlcNAc...) asparagine glycan.

This sequence belongs to the glycosyl hydrolase 18 family.

It is found in the lysosome. In terms of biological role, involved in the degradation of asparagine-linked glycoproteins. Hydrolyze of N-acetyl-beta-D-glucosamine (1-4)N-acetylglucosamine chitobiose core from the reducing end of the bond, it requires prior cleavage by glycosylasparaginase. The protein is Di-N-acetylchitobiase (CTBS) of Homo sapiens (Human).